Consider the following 573-residue polypeptide: Sulfite reductase [NADPH] hemoprotein beta-component (573 aa).

[4Fe-4S] cluster contacts are provided by Cys-438, Cys-444, Cys-483, and Cys-487. Residue Cys-487 participates in siroheme binding.

This sequence belongs to the nitrite and sulfite reductase 4Fe-4S domain family. In terms of assembly, alpha(8)-beta(8). The alpha component is a flavoprotein, the beta component is a hemoprotein. It depends on siroheme as a cofactor. [4Fe-4S] cluster is required as a cofactor.

It catalyses the reaction hydrogen sulfide + 3 NADP(+) + 3 H2O = sulfite + 3 NADPH + 4 H(+). It participates in sulfur metabolism; hydrogen sulfide biosynthesis; hydrogen sulfide from sulfite (NADPH route): step 1/1. In terms of biological role, component of the sulfite reductase complex that catalyzes the 6-electron reduction of sulfite to sulfide. This is one of several activities required for the biosynthesis of L-cysteine from sulfate. The sequence is that of Sulfite reductase [NADPH] hemoprotein beta-component from Nitrosomonas eutropha (strain DSM 101675 / C91 / Nm57).